A 308-amino-acid polypeptide reads, in one-letter code: Ribosomal RNA large subunit methyltransferase F (308 aa).

Belongs to the methyltransferase superfamily. METTL16/RlmF family.

Its subcellular location is the cytoplasm. It carries out the reaction adenosine(1618) in 23S rRNA + S-adenosyl-L-methionine = N(6)-methyladenosine(1618) in 23S rRNA + S-adenosyl-L-homocysteine + H(+). Functionally, specifically methylates the adenine in position 1618 of 23S rRNA. The protein is Ribosomal RNA large subunit methyltransferase F of Shigella dysenteriae serotype 1 (strain Sd197).